We begin with the raw amino-acid sequence, 344 residues long: Pre-mRNA polyadenylation factor fip1 (344 aa).

Disordered regions lie at residues 1–99 (MSNA…LSTA) and 230–344 (NYNT…RNRY). Positions 28–38 (VTVSNAKSPEQ) are enriched in polar residues. The segment covering 39–50 (ASEESDDSDIEF) has biased composition (acidic residues). A compositionally biased stretch (basic and acidic residues) spans 80–92 (QVEKTAVEVKTTE). Low complexity predominate over residues 243–258 (SGAATPNAYVNNNPSS). Polar residues predominate over residues 271–301 (NITSSAGMTHAQPTHNPTSSYGNGASTNYNA). Low complexity predominate over residues 302–317 (SRPPSNHPHSSNYPSS).

Belongs to the FIP1 family.

It is found in the nucleus. In terms of biological role, pre-mRNA polyadenylation factor that directly interacts with poly(A) polymerase. The sequence is that of Pre-mRNA polyadenylation factor fip1 from Schizosaccharomyces pombe (strain 972 / ATCC 24843) (Fission yeast).